The chain runs to 468 residues: 6-phosphogluconate dehydrogenase, decarboxylating (468 aa).

NADP(+) contacts are provided by residues 10 to 15 (GMAVMG), 33 to 35 (NRS), 74 to 76 (VKA), and Asn102. Substrate-binding positions include Asn102 and 128–130 (SGG). Catalysis depends on Lys183, which acts as the Proton acceptor. Residue 186-187 (HN) coordinates substrate. Glu190 functions as the Proton donor in the catalytic mechanism. Tyr191, Lys260, Arg287, Arg445, and His451 together coordinate substrate.

It belongs to the 6-phosphogluconate dehydrogenase family. Homodimer.

It catalyses the reaction 6-phospho-D-gluconate + NADP(+) = D-ribulose 5-phosphate + CO2 + NADPH. Its pathway is carbohydrate degradation; pentose phosphate pathway; D-ribulose 5-phosphate from D-glucose 6-phosphate (oxidative stage): step 3/3. Functionally, catalyzes the oxidative decarboxylation of 6-phosphogluconate to ribulose 5-phosphate and CO(2), with concomitant reduction of NADP to NADPH. The polypeptide is 6-phosphogluconate dehydrogenase, decarboxylating (gnd) (Salmonella typhimurium (strain LT2 / SGSC1412 / ATCC 700720)).